We begin with the raw amino-acid sequence, 65 residues long: Large ribosomal subunit protein bL35 (65 aa).

Residues 1-16 are compositionally biased toward basic residues; the sequence is MPKQKTHRASAKRFKR. Residues 1–20 are disordered; the sequence is MPKQKTHRASAKRFKRTGSG.

It belongs to the bacterial ribosomal protein bL35 family.

This chain is Large ribosomal subunit protein bL35, found in Streptococcus equi subsp. equi (strain 4047).